The primary structure comprises 171 residues: MTKQHAFTREDLLRCSRGELFGPGNAQLPAPNMLMVDRITHISEEGGKFGKGELVAELDINPDLWFFACHFEGDPVMPGCLGLDAMWQLVGFYLGWQGNPGRGRALGSGEVKFFGQVLPTAKKVTYNIQIKRTMRGKLVLAIAEGTVSVDGREIYSAEGLRVGLFTSTENF.

His-70 is an active-site residue.

This sequence belongs to the thioester dehydratase family. FabA subfamily. In terms of assembly, homodimer.

The protein localises to the cytoplasm. The catalysed reaction is a (3R)-hydroxyacyl-[ACP] = a (2E)-enoyl-[ACP] + H2O. The enzyme catalyses (3R)-hydroxydecanoyl-[ACP] = (2E)-decenoyl-[ACP] + H2O. It carries out the reaction (2E)-decenoyl-[ACP] = (3Z)-decenoyl-[ACP]. It functions in the pathway lipid metabolism; fatty acid biosynthesis. Functionally, necessary for the introduction of cis unsaturation into fatty acids. Catalyzes the dehydration of (3R)-3-hydroxydecanoyl-ACP to E-(2)-decenoyl-ACP and then its isomerization to Z-(3)-decenoyl-ACP. Can catalyze the dehydratase reaction for beta-hydroxyacyl-ACPs with saturated chain lengths up to 16:0, being most active on intermediate chain length. This is 3-hydroxydecanoyl-[acyl-carrier-protein] dehydratase from Pseudomonas syringae pv. tomato (strain ATCC BAA-871 / DC3000).